The sequence spans 332 residues: D-galactose/methyl-galactoside binding periplasmic protein MglB (332 aa).

An N-terminal signal peptide occupies residues 1 to 23; it reads MNKKVLTLSAVMASLLFGAHAHA. Residues Asp-37 and Asn-114 each contribute to the beta-D-galactose site. Asp-37 and Asn-114 together coordinate beta-D-glucose. Asp-157, Asn-159, Asp-161, Lys-163, and Gln-165 together coordinate Ca(2+). His-175, Asp-177, and Arg-181 together coordinate beta-D-galactose. Residues His-175, Asp-177, and Arg-181 each coordinate beta-D-glucose. Residue Glu-228 participates in Ca(2+) binding. Beta-D-galactose is bound by residues Asn-234, Asp-259, and Asn-279. Positions 234, 259, and 279 each coordinate beta-D-glucose.

The protein belongs to the bacterial solute-binding protein 2 family. The ABC transporter complex is composed of one ATP-binding protein (MglA), two transmembrane proteins (MglC) and a solute-binding protein (MglB).

It localises to the periplasm. In terms of biological role, part of the ABC transporter complex MglABC involved in galactose/methyl galactoside import. In addition, binds D-galactose and D-glucose and plays a role in the chemotaxis towards these two sugars by interacting with the Trg chemoreceptor. The polypeptide is D-galactose/methyl-galactoside binding periplasmic protein MglB (mglB) (Salmonella typhimurium (strain LT2 / SGSC1412 / ATCC 700720)).